The chain runs to 388 residues: Chorismate synthase (388 aa).

NADP(+) contacts are provided by Arg39 and Arg45. FMN-binding positions include 130–132, 251–252, Gly296, 311–315, and Arg337; these read RSS, NA, and KPIPT.

It belongs to the chorismate synthase family. Homotetramer. The cofactor is FMNH2.

The catalysed reaction is 5-O-(1-carboxyvinyl)-3-phosphoshikimate = chorismate + phosphate. It functions in the pathway metabolic intermediate biosynthesis; chorismate biosynthesis; chorismate from D-erythrose 4-phosphate and phosphoenolpyruvate: step 7/7. Functionally, catalyzes the anti-1,4-elimination of the C-3 phosphate and the C-6 proR hydrogen from 5-enolpyruvylshikimate-3-phosphate (EPSP) to yield chorismate, which is the branch point compound that serves as the starting substrate for the three terminal pathways of aromatic amino acid biosynthesis. This reaction introduces a second double bond into the aromatic ring system. In Lactococcus lactis subsp. cremoris (strain MG1363), this protein is Chorismate synthase.